A 602-amino-acid chain; its full sequence is UvrABC system protein C (602 aa).

The GIY-YIG domain occupies 17–94 (KTSGCYKMYS…IKKYKPTYNI (78 aa)). A UVR domain is found at 199–234 (SKLLNDIEIKMKEVIMKENFEAAIKLKETKKSLIEI).

The protein belongs to the UvrC family. As to quaternary structure, interacts with UvrB in an incision complex.

It is found in the cytoplasm. The UvrABC repair system catalyzes the recognition and processing of DNA lesions. UvrC both incises the 5' and 3' sides of the lesion. The N-terminal half is responsible for the 3' incision and the C-terminal half is responsible for the 5' incision. This chain is UvrABC system protein C, found in Borrelia recurrentis (strain A1).